The sequence spans 78 residues: Acyl carrier protein (78 aa).

A Carrier domain is found at 2–77; that stretch reads SDSAEKVKKI…DAIDYIEANK (76 aa). S37 is subject to O-(pantetheine 4'-phosphoryl)serine.

This sequence belongs to the acyl carrier protein (ACP) family. 4'-phosphopantetheine is transferred from CoA to a specific serine of apo-ACP by AcpS. This modification is essential for activity because fatty acids are bound in thioester linkage to the sulfhydryl of the prosthetic group.

The protein resides in the cytoplasm. Its pathway is lipid metabolism; fatty acid biosynthesis. Its function is as follows. Carrier of the growing fatty acid chain in fatty acid biosynthesis. This is Acyl carrier protein from Sphingopyxis alaskensis (strain DSM 13593 / LMG 18877 / RB2256) (Sphingomonas alaskensis).